Here is a 180-residue protein sequence, read N- to C-terminus: NAD(P)H-quinone oxidoreductase subunit 6, chloroplastic (180 aa).

5 helical membrane-spanning segments follow: residues 10–30 (LLLA…VLLT), 32–52 (IIYS…FYII), 57–77 (FVAV…ILFA), 102–122 (IVCT…SWFG), and 153–173 (FLPF…AITI).

The protein belongs to the complex I subunit 6 family. NDH is composed of at least 16 different subunits, 5 of which are encoded in the nucleus.

The protein resides in the plastid. The protein localises to the chloroplast thylakoid membrane. The catalysed reaction is a plastoquinone + NADH + (n+1) H(+)(in) = a plastoquinol + NAD(+) + n H(+)(out). It catalyses the reaction a plastoquinone + NADPH + (n+1) H(+)(in) = a plastoquinol + NADP(+) + n H(+)(out). NDH shuttles electrons from NAD(P)H:plastoquinone, via FMN and iron-sulfur (Fe-S) centers, to quinones in the photosynthetic chain and possibly in a chloroplast respiratory chain. The immediate electron acceptor for the enzyme in this species is believed to be plastoquinone. Couples the redox reaction to proton translocation, and thus conserves the redox energy in a proton gradient. The protein is NAD(P)H-quinone oxidoreductase subunit 6, chloroplastic (ndhG) of Cryptomeria japonica (Japanese cedar).